Consider the following 174-residue polypeptide: RNA pyrophosphohydrolase (174 aa).

Positions G6–K149 constitute a Nudix hydrolase domain. The short motif at G38–G59 is the Nudix box element.

It belongs to the Nudix hydrolase family. RppH subfamily. A divalent metal cation serves as cofactor.

In terms of biological role, accelerates the degradation of transcripts by removing pyrophosphate from the 5'-end of triphosphorylated RNA, leading to a more labile monophosphorylated state that can stimulate subsequent ribonuclease cleavage. This Neisseria gonorrhoeae (strain ATCC 700825 / FA 1090) protein is RNA pyrophosphohydrolase.